The chain runs to 236 residues: Uridylate kinase (236 aa).

10–13 (KLSG) serves as a coordination point for ATP. Glycine 52 contacts UMP. ATP is bound by residues glycine 53 and arginine 57. Residues aspartate 72 and 133–140 (TGNPFFTT) each bind UMP. ATP-binding residues include threonine 160, tyrosine 166, and aspartate 169.

Belongs to the UMP kinase family. In terms of assembly, homohexamer.

Its subcellular location is the cytoplasm. The catalysed reaction is UMP + ATP = UDP + ADP. It functions in the pathway pyrimidine metabolism; CTP biosynthesis via de novo pathway; UDP from UMP (UMPK route): step 1/1. With respect to regulation, inhibited by UTP. Functionally, catalyzes the reversible phosphorylation of UMP to UDP. The polypeptide is Uridylate kinase (Bacteroides thetaiotaomicron (strain ATCC 29148 / DSM 2079 / JCM 5827 / CCUG 10774 / NCTC 10582 / VPI-5482 / E50)).